Here is a 150-residue protein sequence, read N- to C-terminus: U1 small nuclear ribonucleoprotein C (150 aa).

The Matrin-type zinc finger occupies 4–36; it reads YYCDYCKSYLTHDTMSVRKSHLQGRNHIKFYCD. The segment at 66-132 is disordered; sequence SDAKKSNGSS…GLPLPPPAVY (67 aa). Basic and acidic residues predominate over residues 80-92; it reads DIDKKENSSDHNK. Acidic residues predominate over residues 103–112; that stretch reads NDNDDDDDEM. The span at 115-130 shows a compositional bias: pro residues; the sequence is LPPPPNLSGLPLPPPA.

The protein belongs to the U1 small nuclear ribonucleoprotein C family. U1 snRNP is composed of the 7 core Sm proteins B/B', D1, D2, D3, E, F and G that assemble in a heptameric protein ring on the Sm site of the small nuclear RNA to form the core snRNP, and at least 3 U1 snRNP-specific proteins U1-70K, U1-A and U1-C. U1-C interacts with U1 snRNA and the 5' splice-site region of the pre-mRNA.

It localises to the nucleus. Component of the spliceosomal U1 snRNP, which is essential for recognition of the pre-mRNA 5' splice-site and the subsequent assembly of the spliceosome. U1-C is directly involved in initial 5' splice-site recognition for both constitutive and regulated alternative splicing. The interaction with the 5' splice-site seems to precede base-pairing between the pre-mRNA and the U1 snRNA. Stimulates commitment or early (E) complex formation by stabilizing the base pairing of the 5' end of the U1 snRNA and the 5' splice-site region. This Candida albicans (strain SC5314 / ATCC MYA-2876) (Yeast) protein is U1 small nuclear ribonucleoprotein C.